The following is a 445-amino-acid chain: MSERKFFGTDGIRGKVGSGQMTPELALKLGWAAGRVLSRSGTKKVIIGKDTRISGYMFESALEAGLSAAGLNVMLMGPMPTPAVAYLTRTFRAEAGVVISASHNPYYDNGIKFFSTDGSKLDDNLELEIEAELEKPLVCVESHLLGKVSRIEDARGRYIEYCKGNFPADQTLTGLKIVVDCAHGATYHIAPAVFRELGAEVIAIGDKPNGVNINDKVGATSMAKICETVLAETADLGIALDGDGDRIMMVNSKGEVIDGDQILYILACDAKARGVLRGGVVGTLMSNLGLDLALQALDIPFARSKVGDRYVMELLKELDWRIGGENSGHILNLDHGTTGDGIVAGILVLAAMRRQNATLEQLTAPMEMLPQVLVNVRFEGEHDPLSSDKVKAAQAQVESELGVRGRVLLRKSGTEPLIRVMVEGDDHNTVLAHANLIADAVKSAS.

The active-site Phosphoserine intermediate is the Ser-102. 4 residues coordinate Mg(2+): Ser-102, Asp-241, Asp-243, and Asp-245. Residue Ser-102 is modified to Phosphoserine.

Belongs to the phosphohexose mutase family. It depends on Mg(2+) as a cofactor. Post-translationally, activated by phosphorylation.

The catalysed reaction is alpha-D-glucosamine 1-phosphate = D-glucosamine 6-phosphate. Its function is as follows. Catalyzes the conversion of glucosamine-6-phosphate to glucosamine-1-phosphate. In Shewanella oneidensis (strain ATCC 700550 / JCM 31522 / CIP 106686 / LMG 19005 / NCIMB 14063 / MR-1), this protein is Phosphoglucosamine mutase.